A 612-amino-acid polypeptide reads, in one-letter code: Sulfite reductase [NADPH] hemoprotein beta-component (612 aa).

A disordered region spans residues 1 to 26 (MDDHKPIETPDGPAVDTPGIGARRYE). [4Fe-4S] cluster contacts are provided by Cys-469, Cys-475, Cys-514, and Cys-518. A siroheme-binding site is contributed by Cys-518.

It belongs to the nitrite and sulfite reductase 4Fe-4S domain family. As to quaternary structure, alpha(8)-beta(8). The alpha component is a flavoprotein, the beta component is a hemoprotein. Siroheme serves as cofactor. It depends on [4Fe-4S] cluster as a cofactor.

It carries out the reaction hydrogen sulfide + 3 NADP(+) + 3 H2O = sulfite + 3 NADPH + 4 H(+). The protein operates within sulfur metabolism; hydrogen sulfide biosynthesis; hydrogen sulfide from sulfite (NADPH route): step 1/1. In terms of biological role, component of the sulfite reductase complex that catalyzes the 6-electron reduction of sulfite to sulfide. This is one of several activities required for the biosynthesis of L-cysteine from sulfate. The protein is Sulfite reductase [NADPH] hemoprotein beta-component of Methylorubrum extorquens (strain PA1) (Methylobacterium extorquens).